Reading from the N-terminus, the 562-residue chain is Laccase-2 (562 aa).

A signal peptide spans 1–26 (MASAASSLPLLVSSLLLALFALGAHA). Plastocyanin-like domains lie at 34-150 (DIVM…PAAG) and 160-312 (DEAE…YAGV). N-linked (GlcNAc...) asparagine glycans are attached at residues Asn-39, Asn-53, Asn-72, and Asn-80. Cu cation-binding residues include His-84 and His-86. Asn-118 carries an N-linked (GlcNAc...) asparagine glycan. Residues His-129 and His-131 each coordinate Cu cation. Asn-189, Asn-244, Asn-300, Asn-328, Asn-376, Asn-386, Asn-421, and Asn-445 each carry an N-linked (GlcNAc...) asparagine glycan. The Plastocyanin-like 3 domain occupies 411-546 (DFPDRPPARF…KMAFLVEDGS (136 aa)). His-463, His-466, His-468, His-525, Cys-526, His-527, and His-531 together coordinate Cu cation.

It belongs to the multicopper oxidase family. The cofactor is Cu cation.

It localises to the secreted. The protein localises to the extracellular space. Its subcellular location is the apoplast. It catalyses the reaction 4 hydroquinone + O2 = 4 benzosemiquinone + 2 H2O. Its function is as follows. Lignin degradation and detoxification of lignin-derived products. The polypeptide is Laccase-2 (LAC2) (Oryza sativa subsp. japonica (Rice)).